The following is a 495-amino-acid chain: uncharacterized protein (495 aa).

The next 12 helical transmembrane spans lie at 43–63 (IIIS…MPSI), 75–95 (TLVV…PLIF), 106–126 (PLNI…ALSV), 128–148 (LAMF…GLGI), 168–188 (IYFL…GFIA), 196–216 (WEFW…VVFL), 284–304 (PIMI…YLLF), 323–343 (GLTY…LLPL), 366–386 (PMAF…GWTV), 390–410 (VFWF…VMTF), 426–446 (ASAM…FPLF), and 461–481 (SLLA…YMFG).

Belongs to the major facilitator superfamily. CAR1 family.

The protein resides in the membrane. This is an uncharacterized protein from Schizosaccharomyces pombe (strain 972 / ATCC 24843) (Fission yeast).